The chain runs to 514 residues: Maturase K (514 aa).

This sequence belongs to the intron maturase 2 family. MatK subfamily.

The protein resides in the plastid. It localises to the chloroplast. Functionally, usually encoded in the trnK tRNA gene intron. Probably assists in splicing its own and other chloroplast group II introns. This chain is Maturase K, found in Phoenix dactylifera (Date palm).